The chain runs to 85 residues: Antibacterial factor-related peptide 1 (85 aa).

The N-terminal stretch at 1 to 19 is a signal peptide; it reads MLYFCLLLVLLLPNNGVSS.

As to expression, expressed in the pharynx and body wall muscle.

It is found in the secreted. The sequence is that of Antibacterial factor-related peptide 1 from Caenorhabditis elegans.